The chain runs to 158 residues: Protein Smg homolog (158 aa).

Belongs to the Smg family.

This is Protein Smg homolog from Alteromonas mediterranea (strain DSM 17117 / CIP 110805 / LMG 28347 / Deep ecotype).